Reading from the N-terminus, the 195-residue chain is Probable GTP-binding protein EngB (195 aa).

One can recognise an EngB-type G domain in the interval 24–195; it reads GLSEVALSGR…QIWDLIANYL (172 aa). Residues 32-39, 59-63, 77-80, 144-147, and 176-178 contribute to the GTP site; these read GRSNVGKS, GKTQT, DVPG, TKED, and YSS. Mg(2+) is bound by residues Ser-39 and Thr-61.

Belongs to the TRAFAC class TrmE-Era-EngA-EngB-Septin-like GTPase superfamily. EngB GTPase family. Requires Mg(2+) as cofactor.

Functionally, necessary for normal cell division and for the maintenance of normal septation. The polypeptide is Probable GTP-binding protein EngB (Staphylococcus haemolyticus (strain JCSC1435)).